The chain runs to 385 residues: Cell division protein FtsZ (385 aa).

Residues Gly37–Asn41, Gly125–Gly127, Glu156, Lys160, and Asp204 each bind GTP.

This sequence belongs to the FtsZ family. In terms of assembly, homodimer. Polymerizes to form a dynamic ring structure in a strictly GTP-dependent manner. Interacts directly with several other division proteins.

The protein localises to the cytoplasm. Essential cell division protein that forms a contractile ring structure (Z ring) at the future cell division site. The regulation of the ring assembly controls the timing and the location of cell division. One of the functions of the FtsZ ring is to recruit other cell division proteins to the septum to produce a new cell wall between the dividing cells. Binds GTP and shows GTPase activity. The chain is Cell division protein FtsZ from Helicobacter pylori (strain ATCC 700392 / 26695) (Campylobacter pylori).